The following is a 113-amino-acid chain: MAGFGLPNFGQLTEAFKKAQEIQQNAQALQDELDGMEIEGKSSDGRASVWLSGNQQPLRVRLDPALLQEGQQASETATLEALQAAYEQSTATMKGRMEELTGGLNLNLPGMGG.

Belongs to the YbaB/EbfC family. In terms of assembly, homodimer.

It localises to the cytoplasm. The protein resides in the nucleoid. Binds to DNA and alters its conformation. May be involved in regulation of gene expression, nucleoid organization and DNA protection. The chain is Nucleoid-associated protein Syncc9605_0027 from Synechococcus sp. (strain CC9605).